Here is a 331-residue protein sequence, read N- to C-terminus: Biotin synthase (331 aa).

The Radical SAM core domain maps to 52–277 (PEVEVEGIVS…RTILRYAGGR (226 aa)). Cysteine 67, cysteine 71, and cysteine 74 together coordinate [4Fe-4S] cluster. [2Fe-2S] cluster-binding residues include cysteine 110, cysteine 202, and arginine 272.

This sequence belongs to the radical SAM superfamily. Biotin synthase family. In terms of assembly, homodimer. [4Fe-4S] cluster is required as a cofactor. The cofactor is [2Fe-2S] cluster.

It carries out the reaction (4R,5S)-dethiobiotin + (sulfur carrier)-SH + 2 reduced [2Fe-2S]-[ferredoxin] + 2 S-adenosyl-L-methionine = (sulfur carrier)-H + biotin + 2 5'-deoxyadenosine + 2 L-methionine + 2 oxidized [2Fe-2S]-[ferredoxin]. It participates in cofactor biosynthesis; biotin biosynthesis; biotin from 7,8-diaminononanoate: step 2/2. Its function is as follows. Catalyzes the conversion of dethiobiotin (DTB) to biotin by the insertion of a sulfur atom into dethiobiotin via a radical-based mechanism. The polypeptide is Biotin synthase (Salinispora tropica (strain ATCC BAA-916 / DSM 44818 / JCM 13857 / NBRC 105044 / CNB-440)).